Reading from the N-terminus, the 169-residue chain is Large ribosomal subunit protein uL15 (169 aa).

Positions 1–13 (MKLNEIRDNEGAT) are enriched in basic and acidic residues. Positions 1–40 (MKLNEIRDNEGATKNRMRVGRGIGSGKGKTGGRGVKGQKA) are disordered. A compositionally biased stretch (gly residues) spans 21–35 (RGIGSGKGKTGGRGV).

It belongs to the universal ribosomal protein uL15 family. As to quaternary structure, part of the 50S ribosomal subunit.

Functionally, binds to the 23S rRNA. This is Large ribosomal subunit protein uL15 from Methylorubrum populi (strain ATCC BAA-705 / NCIMB 13946 / BJ001) (Methylobacterium populi).